The sequence spans 930 residues: Dual serine/threonine and tyrosine protein kinase (930 aa).

The span at 1 to 14 (MEGDGVPWGSEPVS) shows a compositional bias: low complexity. Positions 1–22 (MEGDGVPWGSEPVSGPGPGGGG) are disordered. Coiled-coil stretches lie at residues 190–216 (EEDL…MHHA) and 396–432 (RKKE…KEEL). The region spanning 653 to 907 (PKLGQELGRG…PLLGIVQPML (255 aa)) is the Protein kinase domain. Residues 659 to 667 (LGRGQYGVV) and K682 each bind ATP. The Proton acceptor role is filled by D778.

Belongs to the protein kinase superfamily. Ser/Thr protein kinase family.

Its subcellular location is the cytoplasm. The protein localises to the cell membrane. It localises to the apical cell membrane. It is found in the basolateral cell membrane. The protein resides in the cell junction. The enzyme catalyses L-seryl-[protein] + ATP = O-phospho-L-seryl-[protein] + ADP + H(+). It carries out the reaction L-threonyl-[protein] + ATP = O-phospho-L-threonyl-[protein] + ADP + H(+). The catalysed reaction is L-tyrosyl-[protein] + ATP = O-phospho-L-tyrosyl-[protein] + ADP + H(+). Functionally, acts as a positive regulator of ERK phosphorylation downstream of fibroblast growth factor-receptor activation. Involved in the regulation of both caspase-dependent apoptosis and caspase-independent cell death. In the skin, it plays a predominant role in suppressing caspase-dependent apoptosis in response to UV stress in a range of dermal cell types. In Pan troglodytes (Chimpanzee), this protein is Dual serine/threonine and tyrosine protein kinase (DSTYK).